The primary structure comprises 389 residues: Phenylpropanoylacetyl-CoA synthase (389 aa).

Residue Cys-163 is part of the active site.

Belongs to the thiolase-like superfamily. Chalcone/stilbene synthases family. As to quaternary structure, homodimer. In terms of tissue distribution, expressed in both the leaf and rhizome, with higher expression in the rhizome.

It carries out the reaction (E)-feruloyl-CoA + malonyl-CoA + H(+) = (E)-feruloylacetyl-CoA + CO2 + CoA. The catalysed reaction is 4-coumaroyl-CoA + malonyl-CoA + H(+) = (4-coumaroyl)acetyl-CoA + CO2 + CoA. Its pathway is secondary metabolite biosynthesis; flavonoid biosynthesis. Catalyzes the formation of feruloyldiketide-CoA by condensing feruloyl-CoA and malonyl-CoA in the curcuminoid biosynthesis. Has no activity with cinnamoyl-CoA. The polypeptide is Phenylpropanoylacetyl-CoA synthase (DCS) (Curcuma longa (Turmeric)).